The chain runs to 228 residues: 2,3-bisphosphoglycerate-dependent phosphoglycerate mutase (228 aa).

Substrate is bound by residues 8-15, 21-22, Arg60, 87-90, Lys98, 114-115, and 180-181; these read RHGQSQWN, TG, ERHY, RR, and GN. His9 (tele-phosphohistidine intermediate) is an active-site residue. The active-site Proton donor/acceptor is Glu87.

This sequence belongs to the phosphoglycerate mutase family. BPG-dependent PGAM subfamily. In terms of assembly, homodimer.

The enzyme catalyses (2R)-2-phosphoglycerate = (2R)-3-phosphoglycerate. It functions in the pathway carbohydrate degradation; glycolysis; pyruvate from D-glyceraldehyde 3-phosphate: step 3/5. Its function is as follows. Catalyzes the interconversion of 2-phosphoglycerate and 3-phosphoglycerate. In Novosphingobium aromaticivorans (strain ATCC 700278 / DSM 12444 / CCUG 56034 / CIP 105152 / NBRC 16084 / F199), this protein is 2,3-bisphosphoglycerate-dependent phosphoglycerate mutase.